The primary structure comprises 224 residues: UPF0758 protein PM1152 (224 aa).

The region spanning 102 to 224 is the MPN domain; sequence AFKNSENVRF…YYSFAENRLL (123 aa). 3 residues coordinate Zn(2+): histidine 173, histidine 175, and aspartate 186. A JAMM motif motif is present at residues 173-186; that stretch reads HNHPSGNPEPSASD.

Belongs to the UPF0758 family.

The polypeptide is UPF0758 protein PM1152 (Pasteurella multocida (strain Pm70)).